The primary structure comprises 482 residues: Ribosomal RNA small subunit methyltransferase F (482 aa).

Residues 119-125 (ASAPGSK), E143, D170, and D188 contribute to the S-adenosyl-L-methionine site. The Nucleophile role is filled by C241.

It belongs to the class I-like SAM-binding methyltransferase superfamily. RsmB/NOP family.

The protein resides in the cytoplasm. It carries out the reaction cytidine(1407) in 16S rRNA + S-adenosyl-L-methionine = 5-methylcytidine(1407) in 16S rRNA + S-adenosyl-L-homocysteine + H(+). Specifically methylates the cytosine at position 1407 (m5C1407) of 16S rRNA. In Shewanella sp. (strain MR-7), this protein is Ribosomal RNA small subunit methyltransferase F.